Consider the following 124-residue polypeptide: UPF0102 protein Noc_0355 (124 aa).

The protein belongs to the UPF0102 family.

This chain is UPF0102 protein Noc_0355, found in Nitrosococcus oceani (strain ATCC 19707 / BCRC 17464 / JCM 30415 / NCIMB 11848 / C-107).